A 115-amino-acid chain; its full sequence is Insulin (115 aa).

The first 26 residues, 1 to 26, serve as a signal peptide directing secretion; it reads MALSPFLAAVIPLVLLLSRAPPSADT. Disulfide bonds link Cys33-Cys101, Cys45-Cys114, and Cys100-Cys105. The propeptide at 60-92 is c peptide; the sequence is DTGALAAFLPLAYAEDNESQDDESIGINEVLKS.

The protein belongs to the insulin family. As to quaternary structure, heterodimer of a B chain and an A chain linked by two disulfide bonds.

The protein resides in the secreted. Functionally, insulin decreases blood glucose concentration. It increases cell permeability to monosaccharides, amino acids and fatty acids. It accelerates glycolysis, the pentose phosphate cycle, and glycogen synthesis in liver. The protein is Insulin (ins) of Myxine glutinosa (Atlantic hagfish).